Reading from the N-terminus, the 408-residue chain is Phosphoenolpyruvate/phosphate translocator 1, chloroplastic (408 aa).

A chloroplast-targeting transit peptide spans 1–66 (MQSAAAVGLL…ISARRIGLVP (66 aa)). 7 helical membrane passes run 105–125 (TLQL…FNIY), 139–159 (ITNV…ITGI), 165–185 (ISGA…MGNL), 222–242 (PTPF…LASL), 245–262 (ASFN…NVTF), 283–303 (ITLF…VTLL), and 375–395 (TPVS…VFLY). An EamA domain is found at 124 to 241 (IYNKQVLKVF…PIVGGVALAS (118 aa)).

It belongs to the TPT transporter family. PPT (TC 2.A.7.9) subfamily.

It localises to the plastid. The protein localises to the chloroplast membrane. Functionally, phosphoenolpyruvate/phosphate translocator that transports phosphoenolpyruvate (PEP) and dihydroxyacetone phosphate. This is Phosphoenolpyruvate/phosphate translocator 1, chloroplastic (PPT1) from Oryza sativa subsp. japonica (Rice).